A 253-amino-acid chain; its full sequence is Phosphate import ATP-binding protein PstB (253 aa).

Residues 7–248 form the ABC transporter domain; sequence MHSKGLDFFY…PGNKQTEDYI (242 aa). 39 to 46 lines the ATP pocket; sequence GPSGCGKS.

Belongs to the ABC transporter superfamily. Phosphate importer (TC 3.A.1.7) family. The complex is composed of two ATP-binding proteins (PstB), two transmembrane proteins (PstC and PstA) and a solute-binding protein (PstS).

The protein localises to the cell inner membrane. The enzyme catalyses phosphate(out) + ATP + H2O = ADP + 2 phosphate(in) + H(+). Functionally, part of the ABC transporter complex PstSACB involved in phosphate import. Responsible for energy coupling to the transport system. The sequence is that of Phosphate import ATP-binding protein PstB from Oleidesulfovibrio alaskensis (strain ATCC BAA-1058 / DSM 17464 / G20) (Desulfovibrio alaskensis).